The chain runs to 483 residues: E3 ubiquitin-protein ligase TRIM50 (483 aa).

The RING-type zinc-finger motif lies at 16-57 (CPICLEVFKEPLMLQCGHSYCKNCLDSLSEHLDSELRCPVCR). The segment at 84–125 (TEPTVCVHHRNPLSLFCEKDQEFICGLCGLLGSHQHHRVTPV) adopts a B box-type zinc-finger fold. Cys-89, His-92, Cys-111, and His-117 together coordinate Zn(2+). 2 coiled-coil regions span residues 127–169 (TVYS…NESD) and 203–236 (GLVA…GNES). The region spanning 275–474 (DIKLTVWKRL…LPMVLPPPSA (200 aa)) is the B30.2/SPRY domain. Lys-372 is subject to N6-acetyllysine.

The protein belongs to the TRIM/RBCC family. Can form dimers and trimers. Interacts with several E2 ubiquitin-conjugating enzymes, including UBE2L6, UBE2E1, UBE2E3. No interaction with UBE2H. Interacts with BECN1. Interacts with SQSTM1. Interacts with NLRP3. Post-translationally, auto-ubiquitinated. In terms of processing, acetylated by EP300 and KAT2B. HDAC6 drives TRIM50 deacetylation. Acetylation antagonizes with TRIM50 ubiquitination.

Its subcellular location is the cytoplasm. It carries out the reaction S-ubiquitinyl-[E2 ubiquitin-conjugating enzyme]-L-cysteine + [acceptor protein]-L-lysine = [E2 ubiquitin-conjugating enzyme]-L-cysteine + N(6)-ubiquitinyl-[acceptor protein]-L-lysine.. E3 ubiquitin-protein ligase that ubiquitinates Beclin-1/BECN1 in a 'Lys-63'-dependent manner enhancing its binding to ULK1. In turn, promotes starvation-induced autophagy activation. Also interacts with p62/SQSTM1 protein and thereby induces the formation and the autophagy clearance of aggresome-associated polyubiquitinated proteins through HDAC6 interaction. Also promotes NLRP3 inflammasome activation by directly inducing NLRP3 oligomerization independent of its E3 ligase function. This Rattus norvegicus (Rat) protein is E3 ubiquitin-protein ligase TRIM50 (Trim50).